A 184-amino-acid polypeptide reads, in one-letter code: (2E)-enoyl-[ACP] glycyltransferase (184 aa).

This sequence belongs to the FcoT family.

The enzyme catalyses a (3R)-3-[(carboxymethyl)amino]fatty acid + holo-[ACP] + H(+) = a (2E)-enoyl-[ACP] + glycine + H2O. It carries out the reaction (3R)-3-[(carboxylmethyl)amino]decanoate + holo-[ACP] + H(+) = (2E)-decenoyl-[ACP] + glycine + H2O. Involved in the biosynthesis of a unique class of isonitrile lipopeptides (INLPs) that seem to play a role in metal acquisition in M.marinum. Catalyzes a Michael addition of glycine to the beta-position of an alpha,beta-unsaturated fatty acyl-[ACP], producing a (3R)-3-[(carboxymethyl)amino]fatty acid. Acts on the (2E)-decenoyl moiety loaded on the acyl-carrier protein MmaB, forming the product (3R)-3-[(carboxymethyl)amino]decanoate released from MmaB. In Mycobacterium marinum (strain ATCC BAA-535 / M), this protein is (2E)-enoyl-[ACP] glycyltransferase.